The sequence spans 1541 residues: WD repeat-containing protein 62 (1541 aa).

An N-acetylalanine modification is found at A2. The residue at position 33 (S33) is a Phosphoserine. T46 carries the post-translational modification Phosphothreonine. WD repeat units lie at residues 109-150 (TARK…QVAE), 153-194 (GHKY…VVAS), 196-234 (KVSCRVIALSFSEDSSYFVTVGNRHVRFWFLEVSTEAKV), 291-330 (INLKVSLSSCLCVSQELIFCGCTDGIVRIFQAHSLHYLAN), 357-396 (AVYPDTVALTFDPNHQWLSCVYKDHSIYIWDVKDINKVGK), 402-450 (FHSS…DSHW), 490-529 (DMKAGVRVMQVSPDGQHLASGDRSGNLRIHELHFMDELVR), 532-574 (AHDA…SLEQ), 578-618 (DHSS…DGLH), 626-665 (AEKTTLYDMDIDITQKYVAVACQDRNVRVYNTVNGKQKKC), 671-713 (GDEG…KMFG), and 714-752 (HSEIITGMKFTYDCRHLITVSGDSCVFIWHLGPEITNCM). S501 carries the post-translational modification Phosphoserine. 2 disordered regions span residues 762–820 (REQP…KESL) and 911–1050 (LSQS…LPQT). The span at 770 to 780 (KDGKWSRDPRQ) shows a compositional bias: basic and acidic residues. A compositionally biased stretch (polar residues) spans 781–795 (ETCTSMPSEISLSPG). Acidic residues predominate over residues 797-809 (QTEDELEEECEPE). Residues 803–846 (EEECEPEELLKTPSKESLDSDPRCLLTNGKLPLWAKRLLGDDDV) form a WD 13 repeat. Over residues 810-820 (ELLKTPSKESL) the composition is skewed to basic and acidic residues. Positions 937-948 (VSELLCSLESEV) are enriched in low complexity. S943 carries the post-translational modification Phosphoserine. Residues 1008-1026 (PPRPDPDPPFDVAVPPAPG) show a composition bias toward pro residues. T1050 is modified (phosphothreonine). S1095, S1125, and S1151 each carry phosphoserine. Disordered regions lie at residues 1133-1153 (LAGSQPRAEPLRAGTGYTSPG) and 1185-1212 (SSSSVPPTDKTPPTPTALPTPGLAQGVH). The WD 14 repeat unit spans residues 1138–1180 (PRAEPLRAGTGYTSPGRTNVLSAGKAEEPLEAWSPLTSCLTGL). Residues 1193–1202 (DKTPPTPTAL) show a composition bias toward pro residues. S1235, S1255, and S1256 each carry phosphoserine. The tract at residues 1273–1293 (TVTPSSDSEGQEPALPSRGNH) is disordered. Residue T1275 is modified to Phosphothreonine.

In terms of assembly, can form homodimers (via C-terminus). Interacts (via C-terminus) with MAPKBP1 (via C-terminus). Interacts with CDK5RAP2, CEP152, CEP63 and KIAA0753. CEP63, CDK5RAP2, CEP152, WDR62 are proposed to form a stepwise assembled complex at the centrosome forming a ring near parental centrioles.

Its subcellular location is the nucleus. It is found in the cytoplasm. It localises to the cytoskeleton. The protein resides in the spindle pole. The protein localises to the microtubule organizing center. Its subcellular location is the centrosome. It is found in the centriole. Functionally, required for cerebral cortical development. Plays a role in neuronal proliferation and migration. Plays a role in mother-centriole-dependent centriole duplication; the function seems also to involve CEP152, CDK5RAP2 and CEP63 through a stepwise assembled complex at the centrosome that recruits CDK2 required for centriole duplication. The chain is WD repeat-containing protein 62 (WDR62) from Sus scrofa (Pig).